The sequence spans 150 residues: D-aminoacyl-tRNA deacylase (150 aa).

A Gly-cisPro motif, important for rejection of L-amino acids motif is present at residues 138 to 139 (GP).

The protein belongs to the DTD family. Homodimer.

Its subcellular location is the cytoplasm. It carries out the reaction glycyl-tRNA(Ala) + H2O = tRNA(Ala) + glycine + H(+). It catalyses the reaction a D-aminoacyl-tRNA + H2O = a tRNA + a D-alpha-amino acid + H(+). An aminoacyl-tRNA editing enzyme that deacylates mischarged D-aminoacyl-tRNAs. Also deacylates mischarged glycyl-tRNA(Ala), protecting cells against glycine mischarging by AlaRS. Acts via tRNA-based rather than protein-based catalysis; rejects L-amino acids rather than detecting D-amino acids in the active site. By recycling D-aminoacyl-tRNA to D-amino acids and free tRNA molecules, this enzyme counteracts the toxicity associated with the formation of D-aminoacyl-tRNA entities in vivo and helps enforce protein L-homochirality. The sequence is that of D-aminoacyl-tRNA deacylase from Petrotoga mobilis (strain DSM 10674 / SJ95).